A 405-amino-acid polypeptide reads, in one-letter code: Acetate kinase (405 aa).

Residue N7 participates in Mg(2+) binding. K14 is a binding site for ATP. A substrate-binding site is contributed by R92. D149 acts as the Proton donor/acceptor in catalysis. ATP contacts are provided by residues 209 to 213 and 284 to 286; these read HLGNG and DMR. E389 provides a ligand contact to Mg(2+).

It belongs to the acetokinase family. In terms of assembly, homodimer. The cofactor is Mg(2+). Mn(2+) is required as a cofactor.

The protein localises to the cytoplasm. It carries out the reaction acetate + ATP = acetyl phosphate + ADP. The protein operates within metabolic intermediate biosynthesis; acetyl-CoA biosynthesis; acetyl-CoA from acetate: step 1/2. Catalyzes the formation of acetyl phosphate from acetate and ATP. Can also catalyze the reverse reaction. This Borrelia garinii subsp. bavariensis (strain ATCC BAA-2496 / DSM 23469 / PBi) (Borreliella bavariensis) protein is Acetate kinase.